Here is a 236-residue protein sequence, read N- to C-terminus: (5-formylfuran-3-yl)methyl phosphate synthase (236 aa).

The active-site Schiff-base intermediate with substrate is K27. Residue K85 is the Proton acceptor of the active site.

The protein belongs to the MfnB family.

The catalysed reaction is 2 D-glyceraldehyde 3-phosphate = 4-(hydroxymethyl)-2-furancarboxaldehyde phosphate + phosphate + 2 H2O. Its pathway is cofactor biosynthesis; methanofuran biosynthesis. In terms of biological role, catalyzes the formation of 4-(hydroxymethyl)-2-furancarboxaldehyde phosphate (4-HFC-P) from two molecules of glyceraldehyde-3-P (GA-3-P). In Methanothermobacter thermautotrophicus (strain ATCC 29096 / DSM 1053 / JCM 10044 / NBRC 100330 / Delta H) (Methanobacterium thermoautotrophicum), this protein is (5-formylfuran-3-yl)methyl phosphate synthase.